A 200-amino-acid chain; its full sequence is 3-isopropylmalate dehydratase small subunit (200 aa).

It belongs to the LeuD family. LeuD type 1 subfamily. As to quaternary structure, heterodimer of LeuC and LeuD.

It catalyses the reaction (2R,3S)-3-isopropylmalate = (2S)-2-isopropylmalate. Its pathway is amino-acid biosynthesis; L-leucine biosynthesis; L-leucine from 3-methyl-2-oxobutanoate: step 2/4. Functionally, catalyzes the isomerization between 2-isopropylmalate and 3-isopropylmalate, via the formation of 2-isopropylmaleate. The chain is 3-isopropylmalate dehydratase small subunit from Actinobacillus pleuropneumoniae serotype 5b (strain L20).